Reading from the N-terminus, the 266-residue chain is ATP synthase subunit a (266 aa).

The next 7 membrane-spanning stretches (helical) occupy residues 28–48, 90–110, 125–145, 158–178, 187–207, 216–236, and 239–259; these read ISFT…AIFM, LIFT…VPLF, VTVT…VGFT, HGTP…SFIL, LFVA…FIVN, AFLA…MIGI, and LEFL…SLYL.

The protein belongs to the ATPase A chain family. In terms of assembly, F-type ATPases have 2 components, CF(1) - the catalytic core - and CF(0) - the membrane proton channel. CF(1) has five subunits: alpha(3), beta(3), gamma(1), delta(1), epsilon(1). CF(0) has three main subunits: a(1), b(2) and c(9-12). The alpha and beta chains form an alternating ring which encloses part of the gamma chain. CF(1) is attached to CF(0) by a central stalk formed by the gamma and epsilon chains, while a peripheral stalk is formed by the delta and b chains.

It localises to the cell inner membrane. Key component of the proton channel; it plays a direct role in the translocation of protons across the membrane. The sequence is that of ATP synthase subunit a from Zymomonas mobilis subsp. mobilis (strain ATCC 31821 / ZM4 / CP4).